A 521-amino-acid polypeptide reads, in one-letter code: UDP-N-acetylmuramate--L-alanine ligase (521 aa).

Position 136 to 142 (136 to 142 (GAHGKTT)) interacts with ATP.

This sequence belongs to the MurCDEF family.

It is found in the cytoplasm. The enzyme catalyses UDP-N-acetyl-alpha-D-muramate + L-alanine + ATP = UDP-N-acetyl-alpha-D-muramoyl-L-alanine + ADP + phosphate + H(+). Its pathway is cell wall biogenesis; peptidoglycan biosynthesis. Its function is as follows. Cell wall formation. This Bifidobacterium adolescentis (strain ATCC 15703 / DSM 20083 / NCTC 11814 / E194a) protein is UDP-N-acetylmuramate--L-alanine ligase.